Reading from the N-terminus, the 564-residue chain is Hexose transporter HXT17 (564 aa).

A compositionally biased stretch (basic and acidic residues) spans 1-12 (MQSSTESDRDIQ). The disordered stretch occupies residues 1 to 22 (MQSSTESDRDIQDGPDADIHVA). At 1–52 (MQSSTESDRDIQDGPDADIHVAPPVEKEWSDGFDDNEVINGDNVEPPKRGLI) the chain is on the cytoplasmic side. Residues 53 to 73 (GYLVIYLLCYPISFGGFLPGW) traverse the membrane as a helical segment. At 74–109 (DSGITAGFINMDNFKMNFGSYKHSTGEYYLSNVRMG) the chain is on the extracellular side. The helical transmembrane segment at 110-130 (LLVAMFSIGCAIGGLIFARLA) threads the bilayer. Residues 131-136 (DTLGRR) are Cytoplasmic-facing. The chain crosses the membrane as a helical span at residues 137–157 (LAIVIVVLVYMVGAIIQISSN). The Extracellular portion of the chain corresponds to 158 to 167 (HKWYQYFVGK). The chain crosses the membrane as a helical span at residues 168–188 (IIYGLGAGGCSVLCPMLLSEI). The Cytoplasmic portion of the chain corresponds to 189–194 (APTDLR). A helical transmembrane segment spans residues 195–215 (GGLVSLYQLNMTFGIFLGYCS). Residues 216–229 (VYGTRKYDNTAQWR) are Extracellular-facing. A helical membrane pass occupies residues 230-250 (VPLGLCFLWTLIIIIGMLLVP). The Cytoplasmic segment spans residues 251–333 (ESPRYLIECE…VQTFLQLTGE (83 aa)). The chain crosses the membrane as a helical span at residues 334–350 (NYFFFYGTTIFKSVGLT). Topologically, residues 351-356 (DGFETS) are extracellular. Residues 357-374 (IVLGTVNFFSTIIAVMVV) form a helical membrane-spanning segment. The Cytoplasmic segment spans residues 375–381 (DKIGRRK). The chain crosses the membrane as a helical span at residues 382-402 (CLLFGAAGMMACMVIFASIGV). Over 403 to 424 (KCLYPHGQDGPSSKGAGNAMIV) the chain is Extracellular. Residues 425–445 (FTCFYIFCFATTWAPVAYIVV) form a helical membrane-spanning segment. Topologically, residues 446–462 (AESFPSKVKSRAMSIST) are cytoplasmic. Residues 463 to 483 (ACNWLWQFLIGFFTPFITGSI) form a helical membrane-spanning segment. His-484 is a topological domain (extracellular). The helical transmembrane segment at 485–505 (FYYGYVFVGCLVAMFLYVFFF) threads the bilayer. Over 506–564 (LPETIGLSLEEIQLLYEEGIKPWKSASWVPPSRRGIPSEESKTEKKDWKKFLKFSKGSD) the chain is Cytoplasmic.

Belongs to the major facilitator superfamily. Sugar transporter (TC 2.A.1.1) family.

The protein resides in the membrane. In terms of biological role, probable glucose transporter. The protein is Hexose transporter HXT17 (HXT17) of Saccharomyces cerevisiae (strain ATCC 204508 / S288c) (Baker's yeast).